A 179-amino-acid chain; its full sequence is Ribosome maturation factor RimM (179 aa).

A PRC barrel domain is found at 100–176 (KEEFHLLELI…FLIINPPNGL (77 aa)).

This sequence belongs to the RimM family. Binds ribosomal protein uS19.

The protein resides in the cytoplasm. Its function is as follows. An accessory protein needed during the final step in the assembly of 30S ribosomal subunit, possibly for assembly of the head region. Essential for efficient processing of 16S rRNA. May be needed both before and after RbfA during the maturation of 16S rRNA. It has affinity for free ribosomal 30S subunits but not for 70S ribosomes. In Prochlorococcus marinus (strain MIT 9312), this protein is Ribosome maturation factor RimM.